The chain runs to 162 residues: Peptidyl-prolyl cis-trans isomerase (162 aa).

The PPIase cyclophilin-type domain occupies 5 to 161 (FFDVIANGQP…ARIVIDKCGT (157 aa)).

Belongs to the cyclophilin-type PPIase family. PPIase A subfamily.

The protein resides in the cytoplasm. It carries out the reaction [protein]-peptidylproline (omega=180) = [protein]-peptidylproline (omega=0). With respect to regulation, binds cyclosporin A (CsA). CsA mediates some of its effects via an inhibitory action on PPIase. Its function is as follows. PPIases accelerate the folding of proteins. It catalyzes the cis-trans isomerization of proline imidic peptide bonds in oligopeptides. The protein is Peptidyl-prolyl cis-trans isomerase (ppi1) of Schizosaccharomyces pombe (strain 972 / ATCC 24843) (Fission yeast).